A 247-amino-acid chain; its full sequence is Small ribosomal subunit protein uS3 (247 aa).

In terms of domain architecture, KH type-2 spans 39–111 (IYDFFDKKVR…NISIQVIELK (73 aa)). The disordered stretch occupies residues 221–247 (EEMDLLNAPKDRRVRRGGERHASTKKN). The segment covering 236-247 (RGGERHASTKKN) has biased composition (basic and acidic residues).

This sequence belongs to the universal ribosomal protein uS3 family. Part of the 30S ribosomal subunit. Forms a tight complex with proteins S10 and S14.

Its function is as follows. Binds the lower part of the 30S subunit head. Binds mRNA in the 70S ribosome, positioning it for translation. The polypeptide is Small ribosomal subunit protein uS3 (Metamycoplasma arthritidis (strain 158L3-1) (Mycoplasma arthritidis)).